A 341-amino-acid chain; its full sequence is ATPase GET3 (341 aa).

ATP is bound at residue 34-41; sequence KGGVGKTT. Residue Asp63 is part of the active site. Positions 245 and 272 each coordinate ATP. Cys283 and Cys286 together coordinate Zn(2+).

It belongs to the arsA ATPase family. Homodimer.

It is found in the cytoplasm. The protein resides in the endoplasmic reticulum. Its function is as follows. ATPase required for the post-translational delivery of tail-anchored (TA) proteins to the endoplasmic reticulum. Recognizes and selectively binds the transmembrane domain of TA proteins in the cytosol. This complex then targets to the endoplasmic reticulum by membrane-bound receptors, where the tail-anchored protein is released for insertion. This process is regulated by ATP binding and hydrolysis. ATP binding drives the homodimer towards the closed dimer state, facilitating recognition of newly synthesized TA membrane proteins. ATP hydrolysis is required for insertion. Subsequently, the homodimer reverts towards the open dimer state, lowering its affinity for the membrane-bound receptor, and returning it to the cytosol to initiate a new round of targeting. The polypeptide is ATPase GET3 (Ajellomyces capsulatus (strain H143) (Darling's disease fungus)).